A 473-amino-acid polypeptide reads, in one-letter code: Glutamate--tRNA ligase 2 (473 aa).

The short motif at 11 to 21 (PSPTGYLHIGG) is the 'HIGH' region element. The segment covering 113-133 (KARAEGRPPRYDGRWRDRDPS) has biased composition (basic and acidic residues). The interval 113–136 (KARAEGRPPRYDGRWRDRDPSEAP) is disordered. A 'KMSKS' region motif is present at residues 240–244 (KLSKR). Lys-243 is an ATP binding site.

It belongs to the class-I aminoacyl-tRNA synthetase family. Glutamate--tRNA ligase type 1 subfamily. Monomer.

The protein localises to the cytoplasm. It carries out the reaction tRNA(Glu) + L-glutamate + ATP = L-glutamyl-tRNA(Glu) + AMP + diphosphate. Functionally, catalyzes the attachment of glutamate to tRNA(Glu) in a two-step reaction: glutamate is first activated by ATP to form Glu-AMP and then transferred to the acceptor end of tRNA(Glu). The protein is Glutamate--tRNA ligase 2 of Brucella abortus (strain S19).